Reading from the N-terminus, the 107-residue chain is YcgL domain-containing protein Pcryo_0807 (107 aa).

Residues 1-95 (MHCDIYKFLK…QDVMRRQAEL (95 aa)) form the YcgL domain.

The sequence is that of YcgL domain-containing protein Pcryo_0807 from Psychrobacter cryohalolentis (strain ATCC BAA-1226 / DSM 17306 / VKM B-2378 / K5).